The following is a 263-amino-acid chain: Putative methyltransferase DDB_G0268948 (263 aa).

It belongs to the methyltransferase superfamily.

In Dictyostelium discoideum (Social amoeba), this protein is Putative methyltransferase DDB_G0268948.